Here is a 429-residue protein sequence, read N- to C-terminus: G2/mitotic-specific cyclin-B1 (429 aa).

The segment covering Met-1–Glu-14 has biased composition (polar residues). 2 disordered regions span residues Met-1 to Met-21 and Thr-71 to Thr-128. Lys-73 bears the N6-acetyllysine mark. Acidic residues predominate over residues Pro-92–Val-106. Position 122 is a phosphoserine; by CDK1 (Ser-122). At Ser-124 the chain carries Phosphoserine. Ser-129 is modified (phosphoserine; by PLK1). Ser-143 bears the Phosphoserine mark. Interaction with CDK2 regions lie at residues Glu-165–Tyr-173 and Tyr-254–Met-257. A Phosphothreonine modification is found at Thr-317.

It belongs to the cyclin family. Cyclin AB subfamily. In terms of assembly, interacts with the CDC2 protein kinase to form a serine/threonine kinase holoenzyme complex also known as maturation promoting factor (MPF). The cyclin subunit imparts substrate specificity to the complex. Binds HEI10. Interacts with catalytically active RALBP1 and CDC2 during mitosis to form an endocytotic complex during interphase. Interacts with CCNF; interaction is required for nuclear localization. Interacts with CDK5RAP3. Interacts with RFPL4A and UBE2A. Interacts with INCA1. Ubiquitinated by the SCF(NIPA) complex during interphase, leading to its destruction. Not ubiquitinated during G2/M phases. In terms of processing, phosphorylated by PLK1 at Ser-129 on centrosomes during prophase: phosphorylation by PLK1 does not cause nuclear import. Phosphorylation at Ser-143 was also reported to be mediated by PLK1 but Ser-129 seems to be the primary phosphorylation site.

Its subcellular location is the cytoplasm. The protein localises to the nucleus. It is found in the cytoskeleton. It localises to the microtubule organizing center. The protein resides in the centrosome. In terms of biological role, essential for the control of the cell cycle at the G2/M (mitosis) transition. In Cricetulus griseus (Chinese hamster), this protein is G2/mitotic-specific cyclin-B1 (CCNB1).